The sequence spans 551 residues: L-lactate permease (551 aa).

12 helical membrane-spanning segments follow: residues 13 to 33 (NIWL…FALI), 37 to 57 (LKGY…ALLF), 69 to 89 (VVYG…AAVF), 131 to 151 (GAAG…GLGF), 159 to 179 (LCLI…PILV), 194 to 214 (MVGR…MAIM), 245 to 265 (IGPE…LTLF), 306 to 326 (FLFL…ALFA), 366 to 386 (FDWF…SIVW), 405 to 425 (LALP…SNYS), 438 to 458 (TGSA…FLTG), and 530 to 550 (IFTC…TWMI).

The protein belongs to the lactate permease family.

The protein resides in the cell inner membrane. It carries out the reaction (S)-lactate(in) + H(+)(in) = (S)-lactate(out) + H(+)(out). The catalysed reaction is (R)-lactate(in) + H(+)(in) = (R)-lactate(out) + H(+)(out). It catalyses the reaction glycolate(in) + H(+)(in) = glycolate(out) + H(+)(out). Its function is as follows. Uptake of L-lactate across the membrane. Can also transport D-lactate and glycolate. Seems to be driven by a proton motive force. The chain is L-lactate permease (lldP) from Salmonella typhi.